We begin with the raw amino-acid sequence, 1641 residues long: Ophiophagus venom factor (1641 aa).

A signal peptide spans 1–22; that stretch reads MEGMALYLVAALLIGFPGSSHG. N-linked (GlcNAc...) asparagine glycosylation is found at Asn-181 and Asn-209. Residues Pro-507, Asp-530, Val-531, and Asp-533 each coordinate Mg(2+). Intrachain disulfides connect Cys-535-Cys-796, Cys-604-Cys-639, Cys-672-Cys-699, Cys-673-Cys-706, Cys-686-Cys-707, Cys-852-Cys-1491, Cys-1336-Cys-1467, Cys-1367-Cys-1436, Cys-1484-Cys-1489, Cys-1496-Cys-1568, Cys-1515-Cys-1639, and Cys-1615-Cys-1624. A propeptide spanning residues 645–728 is cleaved from the precursor; that stretch reads RRRRSSVLLL…WESGLFLPRN (84 aa). The segment at 649-727 is C3a-like domain; that stretch reads SSVLLLDSKA…QWESGLFLPR (79 aa). Residues 672 to 707 enclose the Anaphylatoxin-like domain; sequence CCEDSMHENPMGYTCEKRAKYIQEGDACKAAFLECC. Positions 731-742 are factor B binding site; it reads EDGFIQDSDIIP. Positions 981 to 1259 are excised as a propeptide; that stretch reads HLIITPSGCG…VMLFQALAEY (279 aa). The C3d-like domain stretch occupies residues 981 to 1259; sequence HLIITPSGCG…VMLFQALAEY (279 aa). Residues 989 to 992 constitute a cross-link (isoglutamyl cysteine thioester (Cys-Gln)); sequence CGEQ. The tract at residues 1186–1249 is factor H binding site; that stretch reads VLMAASTGKN…GGTYGQTQAT (64 aa). The NTR domain occupies 1496–1639; it reads CSLLSQQEKI…LSNILTIFGC (144 aa).

The protein belongs to the venom complement C3 homolog family. Heterotrimer of alpha, beta and gamma chains; disulfide-linked. May be active with factor B in the presence of factor D. Post-translationally, first processed by the removal of 4 Arg residues by furin-type protease, forming two chains, alpha and gamma/beta precursor, linked by a disulfide bond. Probably, a cobrin-like protease cleaves the C3a-like domain and then the C3d-like domain, generating the mature venom factor (OVF). In terms of processing, the beta chain is not glycosylated. In terms of tissue distribution, expressed by the venom gland.

It localises to the secreted. Functionally, complement-activating protein in cobra venom. It is a structural and functional analog of complement component C3b, the activated form of C3. It binds factor B (CFB), which is subsequently cleaved by factor D (CFD) to form the bimolecular complex OVF/Bb. OVF/Bb is a C3/C5 convertase that cleaves both complement components C3 and C5. Structurally, it resembles the C3b degradation product C3c, which is not able to form a C3/C5 convertase. Unlike C3b/Bb, OVF/Bb is a stable complex and completely resistant to the actions of complement regulatory factors H (CFH) and I (CFI). Therefore, OVF continuously activates complement. As a result, OVF exhibits complement-depleting activity. The sequence is that of Ophiophagus venom factor from Ophiophagus hannah (King cobra).